Reading from the N-terminus, the 365-residue chain is Chorismate synthase (365 aa).

Residues 41–61 form a disordered region; that stretch reads IQKELDRRRPGQSEVSTPRHE. NADP(+) is bound at residue arginine 48. FMN is bound by residues 125–127, glycine 285, 300–304, and arginine 327; these read RSS and KPTPS.

Belongs to the chorismate synthase family. FMNH2 serves as cofactor.

It catalyses the reaction 5-O-(1-carboxyvinyl)-3-phosphoshikimate = chorismate + phosphate. Its pathway is metabolic intermediate biosynthesis; chorismate biosynthesis; chorismate from D-erythrose 4-phosphate and phosphoenolpyruvate: step 7/7. Functionally, catalyzes the anti-1,4-elimination of the C-3 phosphate and the C-6 proR hydrogen from 5-enolpyruvylshikimate-3-phosphate (EPSP) to yield chorismate, which is the branch point compound that serves as the starting substrate for the three terminal pathways of aromatic amino acid biosynthesis. This reaction introduces a second double bond into the aromatic ring system. The chain is Chorismate synthase from Methanosarcina barkeri (strain Fusaro / DSM 804).